A 255-amino-acid polypeptide reads, in one-letter code: Small ribosomal subunit protein eS1B (255 aa).

Alanine 2 carries the post-translational modification N-acetylalanine; partial. The residue at position 245 (serine 245) is a Phosphoserine. A Glycyl lysine isopeptide (Lys-Gly) (interchain with G-Cter in ubiquitin) cross-link involves residue lysine 248. Threonine 254 is modified (phosphothreonine).

The protein belongs to the eukaryotic ribosomal protein eS1 family. In terms of assembly, component of the small ribosomal subunit. Mature ribosomes consist of a small (40S) and a large (60S) subunit. The 40S subunit contains about 33 different proteins and 1 molecule of RNA (18S). The 60S subunit contains about 49 different proteins and 3 molecules of RNA (25S, 5.8S and 5S).

It is found in the cytoplasm. The chain is Small ribosomal subunit protein eS1B from Saccharomyces cerevisiae (strain RM11-1a) (Baker's yeast).